The following is a 228-amino-acid chain: C-type lectin domain-containing protein 88 (228 aa).

The signal sequence occupies residues 1–18 (MQFIFFGTLFSGLLLVCA). O-linked (Xyl...) (chondroitin sulfate) serine glycosylation occurs at Ser27. The C-type lectin domain occupies 88-218 (YSDSCYWVET…CTYLFYSICE (131 aa)). Cystine bridges form between Cys109-Cys217 and Cys188-Cys209. Asn220 carries N-linked (GlcNAc...) asparagine glycosylation.

The chain is C-type lectin domain-containing protein 88 from Caenorhabditis elegans.